Consider the following 92-residue polypeptide: uncharacterized protein (92 aa).

The helical transmembrane segment at 65-86 (AVWIFWLCFLVSGLSRAFLVYF) threads the bilayer.

The protein resides in the membrane. This is an uncharacterized protein from Treponema pallidum (strain Nichols).